We begin with the raw amino-acid sequence, 146 residues long: MLAVNFTAFFYNLNISNLTRQVNKMKMDELEKVMIVEGKSDKEKIESVLNEPMRIICTNGTISQLRLEELADELYDKDVYILVDADESGEKLRKQLKREFNEACHLHVDRAYKEVAAAPRHHIASVLLRANLNVHTIFLERKSRGV.

Positions 31-119 constitute a Toprim domain; it reads EKVMIVEGKS…RAYKEVAAAP (89 aa).

This is an uncharacterized protein from Bacillus subtilis (strain 168).